Consider the following 479-residue polypeptide: Protein TRIGALACTOSYLDIACYLGLYCEROL 4, chloroplastic (479 aa).

The chain crosses the lipid bilayer at residues 288–310; sequence VFLSSPHVAVSGIIGSVMTAAFG.

Homodimer. Forms dimeric beta-barrel. Interacts with TGD5.

Its subcellular location is the plastid. The protein localises to the chloroplast outer membrane. It is found in the endoplasmic reticulum. Functionally, involved in lipid transfer from the endoplasmic reticulum (ER) to plastids. Specifically binds phosphatidic acid (PtdOH). This chain is Protein TRIGALACTOSYLDIACYLGLYCEROL 4, chloroplastic, found in Arabidopsis thaliana (Mouse-ear cress).